A 166-amino-acid chain; its full sequence is Large ribosomal subunit protein uL10 (166 aa).

This sequence belongs to the universal ribosomal protein uL10 family. In terms of assembly, part of the ribosomal stalk of the 50S ribosomal subunit. The N-terminus interacts with L11 and the large rRNA to form the base of the stalk. The C-terminus forms an elongated spine to which L12 dimers bind in a sequential fashion forming a multimeric L10(L12)X complex.

Its function is as follows. Forms part of the ribosomal stalk, playing a central role in the interaction of the ribosome with GTP-bound translation factors. The protein is Large ribosomal subunit protein uL10 of Pseudomonas fluorescens (strain SBW25).